The chain runs to 285 residues: Sulfur carrier protein TtuD (285 aa).

2 consecutive Rhodanese domains span residues 20-127 and 161-281; these read EDPK…PLTT and KEGK…VPIA. Cysteine 240 is subject to Cysteine persulfide.

In terms of processing, cys-240 can accept a sulfur atom as persulfide forms from cysteine desulfurases IscS and SufS.

It functions in the pathway tRNA modification. In terms of biological role, required for the efficient 2-thiolation of 5-methyluridine residue at position 54 in the T loop of tRNAs, leading to 5-methyl-2-thiouridine (m(5)s(2)U or s(2)T). TtuD is a sulfur carrier protein that has a role to direct sulfur flow from cysteine desulfurases to m(5)s(2)U synthesis in vivo. It enhances the cysteine desulfurase activity of IscS and SufS, as well as the formation of thiocarboxylated TtuB (TtuB-COSH) in the presence of these desulfurases. In Thermus thermophilus (strain ATCC BAA-163 / DSM 7039 / HB27), this protein is Sulfur carrier protein TtuD.